A 353-amino-acid chain; its full sequence is Photosystem II D2 protein (353 aa).

An N-acetylthreonine modification is found at T2. Residue T2 is modified to Phosphothreonine. A helical transmembrane segment spans residues 41 to 61 (CAYFALGGWFTGTTFVTSWYT). H118 provides a ligand contact to chlorophyll a. The chain crosses the membrane as a helical span at residues 125–141 (GFMLRQFELARSVQLRP). Pheophytin a-binding residues include Q130 and N143. The chain crosses the membrane as a helical span at residues 153-166 (VFVSVFFIYPLGQS). Residue H198 participates in chlorophyll a binding. Residues 208 to 228 (AALLCAIHGATVENTLFEDGD) traverse the membrane as a helical segment. 2 residues coordinate a plastoquinone: H215 and F262. H215 is a binding site for Fe cation. H269 lines the Fe cation pocket. A helical membrane pass occupies residues 279–295 (GLWMSALGVVGLALNLR).

Belongs to the reaction center PufL/M/PsbA/D family. PSII is composed of 1 copy each of membrane proteins PsbA, PsbB, PsbC, PsbD, PsbE, PsbF, PsbH, PsbI, PsbJ, PsbK, PsbL, PsbM, PsbT, PsbX, PsbY, PsbZ, Psb30/Ycf12, at least 3 peripheral proteins of the oxygen-evolving complex and a large number of cofactors. It forms dimeric complexes. It depends on The D1/D2 heterodimer binds P680, chlorophylls that are the primary electron donor of PSII, and subsequent electron acceptors. It shares a non-heme iron and each subunit binds pheophytin, quinone, additional chlorophylls, carotenoids and lipids. There is also a Cl(-1) ion associated with D1 and D2, which is required for oxygen evolution. The PSII complex binds additional chlorophylls, carotenoids and specific lipids. as a cofactor.

The protein resides in the plastid membrane. The catalysed reaction is 2 a plastoquinone + 4 hnu + 2 H2O = 2 a plastoquinol + O2. In terms of biological role, photosystem II (PSII) is a light-driven water:plastoquinone oxidoreductase that uses light energy to abstract electrons from H(2)O, generating O(2) and a proton gradient subsequently used for ATP formation. It consists of a core antenna complex that captures photons, and an electron transfer chain that converts photonic excitation into a charge separation. The D1/D2 (PsbA/PsbD) reaction center heterodimer binds P680, the primary electron donor of PSII as well as several subsequent electron acceptors. D2 is needed for assembly of a stable PSII complex. The polypeptide is Photosystem II D2 protein (Cuscuta exaltata (Tall dodder)).